The following is a 128-amino-acid chain: Large ribosomal subunit protein bL17 (128 aa).

Belongs to the bacterial ribosomal protein bL17 family. Part of the 50S ribosomal subunit. Contacts protein L32.

This Streptococcus gordonii (strain Challis / ATCC 35105 / BCRC 15272 / CH1 / DL1 / V288) protein is Large ribosomal subunit protein bL17.